Reading from the N-terminus, the 315-residue chain is Calumenin (315 aa).

A signal peptide spans 1–19; it reads MDLRQFLLCLSLCTAFALS. At tyrosine 47 the chain carries Phosphotyrosine. Phosphothreonine is present on threonine 65. 6 consecutive EF-hand domains span residues 68–103, 104–139, 151–186, 188–223, 229–264, and 265–300; these read ESKERLGKIVSKIDDDKDGFVTVDELKGWIKFAQKR, WIHEDVERQWKGHDLNEDGLVSWEEYKNATYGYVLD, QMMVRDERRFKMADKDGDLIATKEEFTAFPHPDEYD, MKDIVVQETMEDIDKNADGFIDLEEYIGDMYSHDGN, WVKTEREQFVEFRDKNRDGRMDKEETKDWILPSDYD, and HAEAEARHLVYESDQNKDGKLTKEEIVDKYDLFVGS. Serine 69 bears the Phosphoserine mark. Positions 81, 83, 85, 92, 117, 119, 121, and 128 each coordinate Ca(2+). The N-linked (GlcNAc...) asparagine glycan is linked to asparagine 131. Aspartate 164 contributes to the Ca(2+) binding site. Lysine 165 is modified (N6-acetyllysine). Aspartate 166, aspartate 168, glutamate 175, aspartate 201, asparagine 203, aspartate 205, glutamate 212, aspartate 242, asparagine 244, aspartate 246, arginine 248, and glutamate 253 together coordinate Ca(2+). Position 254 is a phosphothreonine (threonine 254). A phosphoserine mark is found at serine 261 and serine 277. The Ca(2+) site is built by aspartate 278, asparagine 280, aspartate 282, lysine 284, and glutamate 289. The Prevents secretion from ER motif lies at 312–315; it reads HDEF.

The protein belongs to the CREC family. As to quaternary structure, interacts with GGCX.

The protein resides in the endoplasmic reticulum membrane. The protein localises to the golgi apparatus. It localises to the secreted. Its subcellular location is the melanosome. It is found in the sarcoplasmic reticulum lumen. Involved in regulation of vitamin K-dependent carboxylation of multiple N-terminal glutamate residues. Seems to inhibit gamma-carboxylase GGCX. Binds 7 calcium ions with a low affinity. The protein is Calumenin (CALU) of Mesocricetus auratus (Golden hamster).